Reading from the N-terminus, the 433-residue chain is Protein root UVB sensitive 2, chloroplastic (433 aa).

This sequence belongs to the RUS1 family. As to quaternary structure, interacts (via the DUF647 domain) with RUS1 (via the DUF647 domain). In terms of tissue distribution, expressed throughout the plant, with a higher expression near the root apical meristem, in the cortex region of the root elongation zone, in lateral roots and emerging lateral roots. Not detected in extreme root apical meristem or root cap.

It localises to the plastid. Functionally, involved in a root UV-B sensing pathway and in the protection against the hypersensitivity to very low-fluence-rate (VLF) UV-B. RSU1 and RUS2 are probably both negative modulators of the same UV-B perception pathway, which when overstimulated in the roots causes a block to postgermination development. Required for polar auxin transport and to maintain the normal levels of PIN proteins in the root. In Arabidopsis thaliana (Mouse-ear cress), this protein is Protein root UVB sensitive 2, chloroplastic.